Here is a 93-residue protein sequence, read N- to C-terminus: Putative pterin-4-alpha-carbinolamine dehydratase (93 aa).

Belongs to the pterin-4-alpha-carbinolamine dehydratase family.

It catalyses the reaction (4aS,6R)-4a-hydroxy-L-erythro-5,6,7,8-tetrahydrobiopterin = (6R)-L-erythro-6,7-dihydrobiopterin + H2O. The polypeptide is Putative pterin-4-alpha-carbinolamine dehydratase (Roseiflexus sp. (strain RS-1)).